The chain runs to 342 residues: Glycerol-1-phosphate dehydrogenase [NAD(P)+] (342 aa).

Residues glycine 84–aspartate 88 and threonine 106–serine 109 each bind NAD(+). Residue aspartate 111 participates in substrate binding. Serine 115 provides a ligand contact to NAD(+). Position 160 (aspartate 160) interacts with substrate. Positions 160 and 241 each coordinate Zn(2+). Histidine 245 provides a ligand contact to substrate. Residue histidine 260 participates in Zn(2+) binding.

It belongs to the glycerol-1-phosphate dehydrogenase family. Homodimer. Requires Zn(2+) as cofactor.

The protein resides in the cytoplasm. It catalyses the reaction sn-glycerol 1-phosphate + NAD(+) = dihydroxyacetone phosphate + NADH + H(+). The enzyme catalyses sn-glycerol 1-phosphate + NADP(+) = dihydroxyacetone phosphate + NADPH + H(+). The protein operates within membrane lipid metabolism; glycerophospholipid metabolism. Functionally, catalyzes the NAD(P)H-dependent reduction of dihydroxyacetonephosphate (DHAP or glycerone phosphate) to glycerol 1-phosphate (G1P). The G1P thus generated is used as the glycerophosphate backbone of phospholipids in the cellular membranes of Archaea. This chain is Glycerol-1-phosphate dehydrogenase [NAD(P)+], found in Pyrobaculum neutrophilum (strain DSM 2338 / JCM 9278 / NBRC 100436 / V24Sta) (Thermoproteus neutrophilus).